Consider the following 268-residue polypeptide: Phosphatidylglycerol--prolipoprotein diacylglyceryl transferase (268 aa).

Helical transmembrane passes span 16 to 36 (FITL…GIWL), 56 to 76 (IWLV…FNWG), and 92 to 112 (GIAI…FTYV). Arg-136 provides a ligand contact to a 1,2-diacyl-sn-glycero-3-phospho-(1'-sn-glycerol). The next 3 helical transmembrane spans lie at 175–195 (PTFL…LWLF), 204–224 (GTLL…IEGL), and 236–256 (IAQV…FRLY).

The protein belongs to the Lgt family.

The protein resides in the cell inner membrane. It catalyses the reaction L-cysteinyl-[prolipoprotein] + a 1,2-diacyl-sn-glycero-3-phospho-(1'-sn-glycerol) = an S-1,2-diacyl-sn-glyceryl-L-cysteinyl-[prolipoprotein] + sn-glycerol 1-phosphate + H(+). The protein operates within protein modification; lipoprotein biosynthesis (diacylglyceryl transfer). Its function is as follows. Catalyzes the transfer of the diacylglyceryl group from phosphatidylglycerol to the sulfhydryl group of the N-terminal cysteine of a prolipoprotein, the first step in the formation of mature lipoproteins. The chain is Phosphatidylglycerol--prolipoprotein diacylglyceryl transferase from Thermosynechococcus vestitus (strain NIES-2133 / IAM M-273 / BP-1).